The chain runs to 508 residues: Glycogen synthase (508 aa).

Lys-27 serves as a coordination point for ADP-alpha-D-glucose.

It belongs to the glycosyltransferase 1 family. Bacterial/plant glycogen synthase subfamily.

It carries out the reaction [(1-&gt;4)-alpha-D-glucosyl](n) + ADP-alpha-D-glucose = [(1-&gt;4)-alpha-D-glucosyl](n+1) + ADP + H(+). It participates in glycan biosynthesis; glycogen biosynthesis. Its function is as follows. Synthesizes alpha-1,4-glucan chains using ADP-glucose. The sequence is that of Glycogen synthase from Photobacterium profundum (strain SS9).